The chain runs to 185 residues: Putative tyrosine-protein phosphatase OCA1 (185 aa).

Residues 18–178 enclose the Tyrosine-protein phosphatase domain; sequence NFCPVEKQLY…TVEIGSGKGS (161 aa). C116 (phosphocysteine intermediate) is an active-site residue.

The protein belongs to the protein-tyrosine phosphatase family.

It is found in the cytoplasm. It catalyses the reaction O-phospho-L-tyrosyl-[protein] + H2O = L-tyrosyl-[protein] + phosphate. In terms of biological role, putative tyrosine-protein phosphatase required for protection against superoxide stress. The protein is Putative tyrosine-protein phosphatase OCA1 (OCA1) of Meyerozyma guilliermondii (strain ATCC 6260 / CBS 566 / DSM 6381 / JCM 1539 / NBRC 10279 / NRRL Y-324) (Yeast).